Reading from the N-terminus, the 326-residue chain is ATP-dependent 6-phosphofructokinase 2 (326 aa).

Gly14 is an ATP binding site. Residue 24 to 28 (RAVTR) coordinates ADP. ATP contacts are provided by residues 75–76 (RC) and 105–108 (GDGS). Residue Asp106 participates in Mg(2+) binding. Residue 129–131 (TID) coordinates substrate. Asp131 acts as the Proton acceptor in catalysis. Arg158 serves as a coordination point for ADP. Substrate-binding positions include Arg166 and 173–175 (MGR). Residues 189-191 (GAE), Lys215, and 217-219 (KNS) each bind ADP. Substrate-binding positions include Glu226, Arg250, and 256 to 259 (HLQR).

This sequence belongs to the phosphofructokinase type A (PFKA) family. ATP-dependent PFK group I subfamily. Prokaryotic clade 'B1' sub-subfamily. Homotetramer. It depends on Mg(2+) as a cofactor.

It localises to the cytoplasm. It catalyses the reaction beta-D-fructose 6-phosphate + ATP = beta-D-fructose 1,6-bisphosphate + ADP + H(+). The protein operates within carbohydrate degradation; glycolysis; D-glyceraldehyde 3-phosphate and glycerone phosphate from D-glucose: step 3/4. Its activity is regulated as follows. Allosterically activated by ADP and other diphosphonucleosides, and allosterically inhibited by phosphoenolpyruvate. Its function is as follows. Catalyzes the phosphorylation of D-fructose 6-phosphate to fructose 1,6-bisphosphate by ATP, the first committing step of glycolysis. In Bacteroides thetaiotaomicron (strain ATCC 29148 / DSM 2079 / JCM 5827 / CCUG 10774 / NCTC 10582 / VPI-5482 / E50), this protein is ATP-dependent 6-phosphofructokinase 2.